The sequence spans 168 residues: Auxin-responsive protein IAA1 (168 aa).

The disordered stretch occupies residues 1-74 (MEVTNGLNLK…NRKNNNNKNV (74 aa)). Residues 14–18 (LRLGL) carry the EAR-like (transcriptional repression) motif. Polar residues predominate over residues 23-34 (EEQQLELSCVRS). One can recognise a PB1 domain in the interval 74–161 (VSYVKVSMDG…SCQKLRIMKG (88 aa)).

It belongs to the Aux/IAA family. As to quaternary structure, homodimers and heterodimers. Interacts with the auxin-responsive protein IAA2. Interacts with TPL. Phosphorylated by phytochrome A in vitro. In terms of tissue distribution, preferentially expressed in stems, leaves and flowers.

It localises to the nucleus. In terms of biological role, aux/IAA proteins are short-lived transcriptional factors that function as repressors of early auxin response genes at low auxin concentrations. Repression is thought to result from the interaction with auxin response factors (ARFs), proteins that bind to the auxin-responsive promoter element (AuxRE). Formation of heterodimers with ARF proteins may alter their ability to modulate early auxin response genes expression. This chain is Auxin-responsive protein IAA1 (IAA1), found in Arabidopsis thaliana (Mouse-ear cress).